A 275-amino-acid polypeptide reads, in one-letter code: Endolytic peptidoglycan transglycosylase RlpA (275 aa).

An N-terminal signal peptide occupies residues 1 to 22; the sequence is MQIKTITLKLSAVSLGALFFSG. A lipid anchor (N-palmitoyl cysteine) is attached at cysteine 23. Cysteine 23 carries the S-diacylglycerol cysteine lipid modification. The region spanning 200 to 275 is the SPOR domain; sequence IYEGGNFMVQ…AFAGAFVVRE (76 aa).

Belongs to the RlpA family.

Its subcellular location is the cell membrane. Its function is as follows. Lytic transglycosylase with a strong preference for naked glycan strands that lack stem peptides. The chain is Endolytic peptidoglycan transglycosylase RlpA from Campylobacter jejuni subsp. jejuni serotype O:2 (strain ATCC 700819 / NCTC 11168).